A 443-amino-acid polypeptide reads, in one-letter code: ATP-dependent protease ATPase subunit HslU (443 aa).

Residues valine 18 and 60–65 each bind ATP; that span reads GVGKTE. Residues 136–158 are disordered; it reads LPPPRDFNEDSQRTNADSSTRQL. The span at 148–157 shows a compositional bias: polar residues; that stretch reads RTNADSSTRQ. The ATP site is built by aspartate 256, glutamate 321, and arginine 393.

Belongs to the ClpX chaperone family. HslU subfamily. In terms of assembly, a double ring-shaped homohexamer of HslV is capped on each side by a ring-shaped HslU homohexamer. The assembly of the HslU/HslV complex is dependent on binding of ATP.

Its subcellular location is the cytoplasm. ATPase subunit of a proteasome-like degradation complex; this subunit has chaperone activity. The binding of ATP and its subsequent hydrolysis by HslU are essential for unfolding of protein substrates subsequently hydrolyzed by HslV. HslU recognizes the N-terminal part of its protein substrates and unfolds these before they are guided to HslV for hydrolysis. The chain is ATP-dependent protease ATPase subunit HslU from Marinobacter nauticus (strain ATCC 700491 / DSM 11845 / VT8) (Marinobacter aquaeolei).